The following is a 762-amino-acid chain: Cellulose synthase-like protein H2 (762 aa).

The span at 1 to 15 shows a compositional bias: low complexity; the sequence is MAVVAAAAATGSTTR. Residues 1–39 are disordered; sequence MAVVAAAAATGSTTRSGGGGGEGTRSGRKKPPPPPLQER. The next 2 helical transmembrane spans lie at 47-67 and 81-101; these read AWAW…LLAL and GVWR…ALNV. Residues D180 and D470 contribute to the active site. A run of 6 helical transmembrane segments spans residues 541-561, 582-602, 619-639, 673-693, 708-728, and 739-759; these read LAYL…CYGL, FSVP…EYMA, IISV…SLGL, LPVF…VTVG, APGI…FPFV, and GIPW…VTFC.

The protein belongs to the glycosyltransferase 2 family. Plant cellulose synthase-like H subfamily.

The protein localises to the golgi apparatus membrane. Functionally, thought to be a Golgi-localized beta-glycan synthase that polymerize the backbones of noncellulosic polysaccharides (hemicelluloses) of plant cell wall. The sequence is that of Cellulose synthase-like protein H2 (CSLH2) from Oryza sativa subsp. japonica (Rice).